The sequence spans 312 residues: L-lactate dehydrogenase (312 aa).

Residues V11, D32, R37, and 76–77 (GA) contribute to the NAD(+) site. Substrate contacts are provided by residues Q79, R85, and 117 to 120 (NPVD). Residues 115-117 (VSN) and T140 each bind NAD(+). Substrate is bound at residue 145–148 (DTAR). Residues R150 and H165 each contribute to the beta-D-fructose 1,6-bisphosphate site. The active-site Proton acceptor is the H172. The residue at position 217 (Y217) is a Phosphotyrosine. T226 serves as a coordination point for substrate.

It belongs to the LDH/MDH superfamily. LDH family. In terms of assembly, homotetramer.

Its subcellular location is the cytoplasm. It catalyses the reaction (S)-lactate + NAD(+) = pyruvate + NADH + H(+). It participates in fermentation; pyruvate fermentation to lactate; (S)-lactate from pyruvate: step 1/1. Its activity is regulated as follows. Allosterically activated by fructose 1,6-bisphosphate (FBP). Its function is as follows. Catalyzes the conversion of lactate to pyruvate. In Pseudothermotoga lettingae (strain ATCC BAA-301 / DSM 14385 / NBRC 107922 / TMO) (Thermotoga lettingae), this protein is L-lactate dehydrogenase.